Here is a 320-residue protein sequence, read N- to C-terminus: Cytochrome f (320 aa).

An N-terminal signal peptide occupies residues 1–35 (MQTRKTFSWIKEQIARSISVSLLIYIITRTSISSA). Residues Tyr-36, Cys-56, Cys-59, and His-60 each coordinate heme. A helical membrane pass occupies residues 286-306 (VQGLLFFLASVILAQIFLVLK).

The protein belongs to the cytochrome f family. In terms of assembly, the 4 large subunits of the cytochrome b6-f complex are cytochrome b6, subunit IV (17 kDa polypeptide, petD), cytochrome f and the Rieske protein, while the 4 small subunits are PetG, PetL, PetM and PetN. The complex functions as a dimer. It depends on heme as a cofactor.

The protein resides in the plastid. It is found in the chloroplast thylakoid membrane. Its function is as follows. Component of the cytochrome b6-f complex, which mediates electron transfer between photosystem II (PSII) and photosystem I (PSI), cyclic electron flow around PSI, and state transitions. This is Cytochrome f from Jasminum nudiflorum (Winter jasmine).